The primary structure comprises 260 residues: uncharacterized protein (260 aa).

The first 22 residues, Met-1–Gly-22, serve as a signal peptide directing secretion. Residue Cys-23 is the site of N-palmitoyl cysteine attachment. The S-diacylglycerol cysteine moiety is linked to residue Cys-23.

Belongs to the staphylococcal tandem lipoprotein family.

It is found in the cell membrane. This is an uncharacterized protein from Staphylococcus aureus (strain MSSA476).